The following is a 162-amino-acid chain: MALITTGNGLIRDLEKFGSVGVYVPLEGGFEGRYRRRLRAAGYTTLQFTARGLGDVAAYLTGVHGVRPPHLGKKSSGNGAAVGNVYYLPPIVGSQLEHLPPKSKGLVLWIIEGHILSDQEVEFLTSLPSLEPRVKVVVERGGDRTFRWKALKDTFSASYQAV.

The protein belongs to the complex I NdhN subunit family. As to quaternary structure, NDH-1 can be composed of about 15 different subunits; different subcomplexes with different compositions have been identified which probably have different functions.

It is found in the cellular thylakoid membrane. The enzyme catalyses a plastoquinone + NADH + (n+1) H(+)(in) = a plastoquinol + NAD(+) + n H(+)(out). It carries out the reaction a plastoquinone + NADPH + (n+1) H(+)(in) = a plastoquinol + NADP(+) + n H(+)(out). NDH-1 shuttles electrons from an unknown electron donor, via FMN and iron-sulfur (Fe-S) centers, to quinones in the respiratory and/or the photosynthetic chain. The immediate electron acceptor for the enzyme in this species is believed to be plastoquinone. Couples the redox reaction to proton translocation, and thus conserves the redox energy in a proton gradient. Cyanobacterial NDH-1 also plays a role in inorganic carbon-concentration. This chain is NAD(P)H-quinone oxidoreductase subunit N, found in Nostoc sp. (strain PCC 7120 / SAG 25.82 / UTEX 2576).